Consider the following 116-residue polypeptide: Phosphoribosyl-ATP pyrophosphatase (116 aa).

This sequence belongs to the PRA-PH family.

Its subcellular location is the cytoplasm. It catalyses the reaction 1-(5-phospho-beta-D-ribosyl)-ATP + H2O = 1-(5-phospho-beta-D-ribosyl)-5'-AMP + diphosphate + H(+). It functions in the pathway amino-acid biosynthesis; L-histidine biosynthesis; L-histidine from 5-phospho-alpha-D-ribose 1-diphosphate: step 2/9. The chain is Phosphoribosyl-ATP pyrophosphatase from Bordetella avium (strain 197N).